The chain runs to 539 residues: Histone-arginine methyltransferase CARMER (539 aa).

The SAM-dependent MTase PRMT-type domain maps to 149 to 458 (ASQYFQFYGY…QSYDVTIDLH (310 aa)). 6 residues coordinate S-adenosyl-L-methionine: Gln-162, Arg-171, Gly-195, Glu-217, Glu-246, and Thr-274. Residue Arg-509 is modified to Asymmetric dimethylarginine; by autocatalysis.

This sequence belongs to the class I-like SAM-binding methyltransferase superfamily. Protein arginine N-methyltransferase family. As to quaternary structure, homodimer. In terms of processing, the dimethylated protein is the major form.

The protein resides in the cytoplasm. It localises to the nucleus. The enzyme catalyses L-arginyl-[protein] + 2 S-adenosyl-L-methionine = N(omega),N(omega)-dimethyl-L-arginyl-[protein] + 2 S-adenosyl-L-homocysteine + 2 H(+). Methylates (mono- and asymmetric dimethylation) the guanidino nitrogens of arginyl residues in proteins. May methylate histone H3 at 'Arg-17' and activate transcription via chromatin remodeling. The protein is Histone-arginine methyltransferase CARMER (Art4) of Drosophila mojavensis (Fruit fly).